The primary structure comprises 268 residues: Proenkephalin-A (268 aa).

The signal sequence occupies residues 1 to 24 (MARFLRLCTWLLALGSCLLATVQA). 3 disulfide bridges follow: cysteine 26–cysteine 48, cysteine 30–cysteine 52, and cysteine 33–cysteine 65. The interval 163–184 (TGDNRAKDSHQQESTNNDEDMS) is disordered. 2 propeptides span residues 197–208 (SPQLEDEAKELQ) and 218–228 (VGRPEWWMDYQ). Serine 252 is modified (phosphoserine).

This sequence belongs to the opioid neuropeptide precursor family. Proenkephalin-A is cleaved by CTSL to generate Met-enkephalin. In terms of processing, processed and degraded by ACE. Post-translationally, probably cleaved by ACE. Processed by ACE to generate Met-enkephalin in the nucleus accumbens of the brain. In terms of processing, the N-terminal domain contains 6 conserved cysteines thought to be involved in disulfide bonding and/or processing. In terms of tissue distribution, spermatogenic and somatic cells.

Its subcellular location is the cytoplasmic vesicle. The protein localises to the secretory vesicle. It localises to the chromaffin granule lumen. It is found in the secreted. Neuropeptide that competes with and mimic the effects of opiate drugs. They play a role in a number of physiologic functions, including pain perception and responses to stress. In terms of biological role, met-enkephalin-Arg-Phe neuropeptide acts as a strong ligand of Mu-type opioid receptor OPRM1. Met-enkephalin-Arg-Phe-binding to OPRM1 in the nucleus accumbens of the brain increases activation of OPRM1, leading to long-term synaptic depression of glutamate release. Functionally, increases glutamate release in the striatum and decreases GABA concentration in the striatum. Its function is as follows. Increases glutamate release in the striatum. This is Proenkephalin-A (Penk) from Mus musculus (Mouse).